The sequence spans 415 residues: Phosphoglycerate kinase (415 aa).

(2R)-3-phosphoglycerate-binding residues include Val-23, Asp-24, Phe-25, Asn-26, Gln-39, Arg-40, Ser-63, His-64, Gly-66, Arg-67, Leu-122, Arg-123, and Arg-170. Gly-213 serves as a coordination point for ADP. Residue Gly-213 participates in CDP binding. AMP is bound by residues Ala-214 and Lys-215. Ala-214 is an ATP binding site. Residue Ala-214 participates in Mg(2+) binding. Asp-218 contacts CDP. Asp-218 contributes to the Mg(2+) binding site. Position 219 (Lys-219) interacts with AMP. Residue Lys-219 participates in ATP binding. Gly-237 provides a ligand contact to ADP. Gly-237 is a CDP binding site. AMP is bound by residues Gly-238 and Gly-311. Residues Gly-238 and Gly-311 each coordinate ATP. CDP is bound by residues Gly-336 and Phe-341. Residue Phe-341 coordinates ADP. Glu-342 contributes to the AMP binding site. ATP contacts are provided by Glu-342, Asp-373, and Thr-374. Asp-373 provides a ligand contact to Mg(2+).

This sequence belongs to the phosphoglycerate kinase family. Monomer. Mg(2+) serves as cofactor.

It localises to the cytoplasm. The protein resides in the mitochondrion. The catalysed reaction is (2R)-3-phosphoglycerate + ATP = (2R)-3-phospho-glyceroyl phosphate + ADP. It participates in carbohydrate degradation; glycolysis; pyruvate from D-glyceraldehyde 3-phosphate: step 2/5. Catalyzes one of the two ATP producing reactions in the glycolytic pathway via the reversible conversion of 1,3-diphosphoglycerate to 3-phosphoglycerate. Both L- and D- forms of purine and pyrimidine nucleotides can be used as substrates, but the activity is much lower on pyrimidines. Negatively regulates the biosynthesis of acetyl-CoA from pyruvate in the mitochondrion. This Penicillium chrysogenum (Penicillium notatum) protein is Phosphoglycerate kinase (PGKA).